We begin with the raw amino-acid sequence, 302 residues long: Phytoene synthase (302 aa).

The protein belongs to the phytoene/squalene synthase family. Requires ATP as cofactor. It depends on Mn(2+) as a cofactor. The cofactor is Mg(2+).

Its pathway is carotenoid biosynthesis; phytoene biosynthesis. Involved in the biosynthesis of carotenoids. Catalyzes the condensation of two molecules of geranylgeranyl diphosphate (GGPP) to give prephytoene diphosphate (PPPP) and the subsequent rearrangement of the cyclopropylcarbinyl intermediate to yield phytoene. This chain is Phytoene synthase (crtB), found in Mycobacterium bovis (strain ATCC BAA-935 / AF2122/97).